The chain runs to 438 residues: UDP-N-acetylmuramoylalanine--D-glutamate ligase (438 aa).

Residue 112 to 118 (GSNGKST) participates in ATP binding.

Belongs to the MurCDEF family.

The protein localises to the cytoplasm. The catalysed reaction is UDP-N-acetyl-alpha-D-muramoyl-L-alanine + D-glutamate + ATP = UDP-N-acetyl-alpha-D-muramoyl-L-alanyl-D-glutamate + ADP + phosphate + H(+). It participates in cell wall biogenesis; peptidoglycan biosynthesis. Its function is as follows. Cell wall formation. Catalyzes the addition of glutamate to the nucleotide precursor UDP-N-acetylmuramoyl-L-alanine (UMA). In Shigella boydii serotype 4 (strain Sb227), this protein is UDP-N-acetylmuramoylalanine--D-glutamate ligase.